Here is a 155-residue protein sequence, read N- to C-terminus: Small ribosomal subunit protein uS7 (155 aa).

It belongs to the universal ribosomal protein uS7 family. As to quaternary structure, part of the 30S ribosomal subunit. Contacts proteins S9 and S11.

Its function is as follows. One of the primary rRNA binding proteins, it binds directly to 16S rRNA where it nucleates assembly of the head domain of the 30S subunit. Is located at the subunit interface close to the decoding center, probably blocks exit of the E-site tRNA. The protein is Small ribosomal subunit protein uS7 of Xylella fastidiosa (strain 9a5c).